The following is a 529-amino-acid chain: Bifunctional purine biosynthesis protein PurH (529 aa).

Residues 1 to 148 (MQQRRPVRRA…KNHKDVAIVV (148 aa)) form the MGS-like domain.

It belongs to the PurH family.

The catalysed reaction is (6R)-10-formyltetrahydrofolate + 5-amino-1-(5-phospho-beta-D-ribosyl)imidazole-4-carboxamide = 5-formamido-1-(5-phospho-D-ribosyl)imidazole-4-carboxamide + (6S)-5,6,7,8-tetrahydrofolate. The enzyme catalyses IMP + H2O = 5-formamido-1-(5-phospho-D-ribosyl)imidazole-4-carboxamide. It functions in the pathway purine metabolism; IMP biosynthesis via de novo pathway; 5-formamido-1-(5-phospho-D-ribosyl)imidazole-4-carboxamide from 5-amino-1-(5-phospho-D-ribosyl)imidazole-4-carboxamide (10-formyl THF route): step 1/1. It participates in purine metabolism; IMP biosynthesis via de novo pathway; IMP from 5-formamido-1-(5-phospho-D-ribosyl)imidazole-4-carboxamide: step 1/1. The protein is Bifunctional purine biosynthesis protein PurH of Salmonella dublin (strain CT_02021853).